Consider the following 265-residue polypeptide: Thiazole synthase (265 aa).

K103 acts as the Schiff-base intermediate with DXP in catalysis. Residues G164, A190–G191, and N212–T213 contribute to the 1-deoxy-D-xylulose 5-phosphate site.

Belongs to the ThiG family. As to quaternary structure, homotetramer. Forms heterodimers with either ThiH or ThiS.

It localises to the cytoplasm. The enzyme catalyses [ThiS sulfur-carrier protein]-C-terminal-Gly-aminoethanethioate + 2-iminoacetate + 1-deoxy-D-xylulose 5-phosphate = [ThiS sulfur-carrier protein]-C-terminal Gly-Gly + 2-[(2R,5Z)-2-carboxy-4-methylthiazol-5(2H)-ylidene]ethyl phosphate + 2 H2O + H(+). Its pathway is cofactor biosynthesis; thiamine diphosphate biosynthesis. Catalyzes the rearrangement of 1-deoxy-D-xylulose 5-phosphate (DXP) to produce the thiazole phosphate moiety of thiamine. Sulfur is provided by the thiocarboxylate moiety of the carrier protein ThiS. In vitro, sulfur can be provided by H(2)S. The protein is Thiazole synthase of Bordetella bronchiseptica (strain ATCC BAA-588 / NCTC 13252 / RB50) (Alcaligenes bronchisepticus).